The primary structure comprises 154 residues: Peptide methionine sulfoxide reductase MsrB (154 aa).

One can recognise a MsrB domain in the interval aspartate 28–isoleucine 150. Positions 67, 70, 116, and 119 each coordinate Zn(2+). Catalysis depends on cysteine 139, which acts as the Nucleophile.

Belongs to the MsrB Met sulfoxide reductase family. Requires Zn(2+) as cofactor.

It carries out the reaction L-methionyl-[protein] + [thioredoxin]-disulfide + H2O = L-methionyl-(R)-S-oxide-[protein] + [thioredoxin]-dithiol. In Vibrio vulnificus (strain YJ016), this protein is Peptide methionine sulfoxide reductase MsrB.